Consider the following 320-residue polypeptide: Olfactory receptor 2T12 (320 aa).

Residues M1–Q23 lie on the Extracellular side of the membrane. Residue N17 is glycosylated (N-linked (GlcNAc...) asparagine). A helical transmembrane segment spans residues V24–I47. The Cytoplasmic portion of the chain corresponds to H48–R55. Residues P56–P77 form a helical membrane-spanning segment. The Extracellular segment spans residues K78–Q98. A disulfide bridge links C95 with C187. Residues I99–Y118 traverse the membrane as a helical segment. Over D119–Q137 the chain is Cytoplasmic. Residues L138 to L156 form a helical membrane-spanning segment. Topologically, residues Q157–F193 are extracellular. Residues E194–G217 form a helical membrane-spanning segment. Over L218–K234 the chain is Cytoplasmic. A helical membrane pass occupies residues A235–Y257. The Extracellular segment spans residues M258–K270. The helical transmembrane segment at V271–V290 threads the bilayer. Residues R291–R320 lie on the Cytoplasmic side of the membrane.

It belongs to the G-protein coupled receptor 1 family.

Its subcellular location is the cell membrane. Odorant receptor. The protein is Olfactory receptor 2T12 (OR2T12) of Homo sapiens (Human).